The primary structure comprises 806 residues: Sperm head and tail associated protein (806 aa).

Disordered stretches follow at residues 1 to 36, 257 to 329, 428 to 496, and 707 to 806; these read MNSS…PSSC, TPAS…MSGS, LNNQ…CPQP, and SQIN…SKKK. Residues 13-27 show a composition bias toward polar residues; that stretch reads APSTSPQADCPNNYS. Positions 277–290 are enriched in low complexity; the sequence is PPLSSASSPPSGNP. Polar residues predominate over residues 320–329; sequence LSSQAGMSGS. The tract at residues 521–806 is interaction with CRISP2; it reads KEPPPETAVL…QIKSPHSKKK (286 aa). 2 stretches are compositionally biased toward low complexity: residues 710–723 and 733–754; these read NHQN…KNSS and RRGA…SSTQ. Residues 773-788 show a composition bias toward polar residues; the sequence is QSQSPADGKIESQSKS.

As to quaternary structure, interacts with CRISP2. In terms of tissue distribution, isoforms 3 and 4 are expressed in testis (at protein level).

The protein resides in the cytoplasm. In terms of biological role, plays a role during spermatogenesis. In Mus musculus (Mouse), this protein is Sperm head and tail associated protein (Nsun4).